Reading from the N-terminus, the 160-residue chain is S-ribosylhomocysteine lyase (160 aa).

Fe cation contacts are provided by His57, His61, and Cys127.

Belongs to the LuxS family. Homodimer. It depends on Fe cation as a cofactor.

It carries out the reaction S-(5-deoxy-D-ribos-5-yl)-L-homocysteine = (S)-4,5-dihydroxypentane-2,3-dione + L-homocysteine. Involved in the synthesis of autoinducer 2 (AI-2) which is secreted by bacteria and is used to communicate both the cell density and the metabolic potential of the environment. The regulation of gene expression in response to changes in cell density is called quorum sensing. Catalyzes the transformation of S-ribosylhomocysteine (RHC) to homocysteine (HC) and 4,5-dihydroxy-2,3-pentadione (DPD). The protein is S-ribosylhomocysteine lyase of Streptococcus pyogenes serotype M2 (strain MGAS10270).